A 988-amino-acid chain; its full sequence is Bifunctional glutamine synthetase adenylyltransferase/adenylyl-removing enzyme (988 aa).

Residues 1 to 472 (MTKRETVERR…RYSALFEQET (472 aa)) are adenylyl removase. The segment at 476–988 (GEAGNLVFTG…AFVAVVKNGG (513 aa)) is adenylyl transferase.

It belongs to the GlnE family. The cofactor is Mg(2+).

The catalysed reaction is [glutamine synthetase]-O(4)-(5'-adenylyl)-L-tyrosine + phosphate = [glutamine synthetase]-L-tyrosine + ADP. It catalyses the reaction [glutamine synthetase]-L-tyrosine + ATP = [glutamine synthetase]-O(4)-(5'-adenylyl)-L-tyrosine + diphosphate. Its function is as follows. Involved in the regulation of glutamine synthetase GlnA, a key enzyme in the process to assimilate ammonia. When cellular nitrogen levels are high, the C-terminal adenylyl transferase (AT) inactivates GlnA by covalent transfer of an adenylyl group from ATP to specific tyrosine residue of GlnA, thus reducing its activity. Conversely, when nitrogen levels are low, the N-terminal adenylyl removase (AR) activates GlnA by removing the adenylyl group by phosphorolysis, increasing its activity. The regulatory region of GlnE binds the signal transduction protein PII (GlnB) which indicates the nitrogen status of the cell. The polypeptide is Bifunctional glutamine synthetase adenylyltransferase/adenylyl-removing enzyme (Agrobacterium fabrum (strain C58 / ATCC 33970) (Agrobacterium tumefaciens (strain C58))).